Consider the following 308-residue polypeptide: Methionyl-tRNA formyltransferase (308 aa).

A (6S)-5,6,7,8-tetrahydrofolate-binding site is contributed by 110 to 113 (SLLP).

The protein belongs to the Fmt family.

It carries out the reaction L-methionyl-tRNA(fMet) + (6R)-10-formyltetrahydrofolate = N-formyl-L-methionyl-tRNA(fMet) + (6S)-5,6,7,8-tetrahydrofolate + H(+). In terms of biological role, attaches a formyl group to the free amino group of methionyl-tRNA(fMet). The formyl group appears to play a dual role in the initiator identity of N-formylmethionyl-tRNA by promoting its recognition by IF2 and preventing the misappropriation of this tRNA by the elongation apparatus. The sequence is that of Methionyl-tRNA formyltransferase from Neisseria meningitidis serogroup C (strain 053442).